Reading from the N-terminus, the 134-residue chain is Translation initiation factor 2 subunit beta (134 aa).

Residues 1–12 show a composition bias toward basic and acidic residues; the sequence is MGYEEQLDRALE. A disordered region spans residues 1–32; it reads MGYEEQLDRALEETPDIEGTAARFSVPDPDVR.

This sequence belongs to the eIF-2-beta/eIF-5 family. As to quaternary structure, heterotrimer composed of an alpha, a beta and a gamma chain.

EIF-2 functions in the early steps of protein synthesis by forming a ternary complex with GTP and initiator tRNA. The protein is Translation initiation factor 2 subunit beta of Natronomonas pharaonis (strain ATCC 35678 / DSM 2160 / CIP 103997 / JCM 8858 / NBRC 14720 / NCIMB 2260 / Gabara) (Halobacterium pharaonis).